Reading from the N-terminus, the 156-residue chain is Ribosomal RNA large subunit methyltransferase H (156 aa).

S-adenosyl-L-methionine-binding positions include L73, G104, and 123-128 (LSALTL).

This sequence belongs to the RNA methyltransferase RlmH family. Homodimer.

It localises to the cytoplasm. It catalyses the reaction pseudouridine(1915) in 23S rRNA + S-adenosyl-L-methionine = N(3)-methylpseudouridine(1915) in 23S rRNA + S-adenosyl-L-homocysteine + H(+). Its function is as follows. Specifically methylates the pseudouridine at position 1915 (m3Psi1915) in 23S rRNA. In Shewanella woodyi (strain ATCC 51908 / MS32), this protein is Ribosomal RNA large subunit methyltransferase H.